The chain runs to 469 residues: Glutamine synthetase (469 aa).

The GS beta-grasp domain occupies 14 to 99 (NDVKFVDLRF…VCDILDPVSG (86 aa)). Residues 106-469 (RRGTAKKAEA…PVEYDMYYSA (364 aa)) form the GS catalytic domain. Residues Glu131 and Glu133 each contribute to the Mg(2+) site. Glu209 is an ATP binding site. Positions 214 and 221 each coordinate Mg(2+). Residues 265–266 (NG) and Gly266 each bind L-glutamate. His270 lines the Mg(2+) pocket. ATP is bound by residues 272 to 274 (HQS) and Ser274. L-glutamate is bound by residues Arg322, Glu328, and Arg340. ATP contacts are provided by Arg340, Arg345, and Lys353. Glu358 contacts Mg(2+). Arg360 is an L-glutamate binding site. Tyr398 is modified (O-AMP-tyrosine).

It belongs to the glutamine synthetase family. Oligomer of 12 subunits arranged in the form of two hexameric ring. Requires Mg(2+) as cofactor.

It localises to the cytoplasm. The catalysed reaction is L-glutamate + NH4(+) + ATP = L-glutamine + ADP + phosphate + H(+). With respect to regulation, the activity of this enzyme could be controlled by adenylation under conditions of abundant glutamine. Functionally, catalyzes the ATP-dependent biosynthesis of glutamine from glutamate and ammonia. The protein is Glutamine synthetase of Rhizobium leguminosarum bv. viciae.